The chain runs to 448 residues: D-inositol 3-phosphate glycosyltransferase (448 aa).

The disordered stretch occupies residues Met-1 to Arg-21. A 1D-myo-inositol 3-phosphate-binding site is contributed by His-29. UDP-N-acetyl-alpha-D-glucosamine contacts are provided by residues Gln-35–Pro-36 and Gly-43. 1D-myo-inositol 3-phosphate is bound by residues Asp-40–Asn-45, Lys-98, Tyr-131, Thr-155, and Arg-175. The UDP-N-acetyl-alpha-D-glucosamine site is built by Arg-255, Lys-260, and Gln-321. 3 residues coordinate Mg(2+): Tyr-330, Arg-331, and Ala-333. Glu-343 and Glu-351 together coordinate UDP-N-acetyl-alpha-D-glucosamine. Position 357 (Thr-357) interacts with Mg(2+).

This sequence belongs to the glycosyltransferase group 1 family. MshA subfamily. As to quaternary structure, homodimer.

The catalysed reaction is 1D-myo-inositol 3-phosphate + UDP-N-acetyl-alpha-D-glucosamine = 1D-myo-inositol 2-acetamido-2-deoxy-alpha-D-glucopyranoside 3-phosphate + UDP + H(+). Functionally, catalyzes the transfer of a N-acetyl-glucosamine moiety to 1D-myo-inositol 3-phosphate to produce 1D-myo-inositol 2-acetamido-2-deoxy-glucopyranoside 3-phosphate in the mycothiol biosynthesis pathway. This Salinispora arenicola (strain CNS-205) protein is D-inositol 3-phosphate glycosyltransferase.